The sequence spans 77 residues: Putative sulfur carrier protein AF_0188 (77 aa).

Cys-11 acts as the Cysteine persulfide intermediate in catalysis.

The protein belongs to the sulfur carrier protein TusA family.

The polypeptide is Putative sulfur carrier protein AF_0188 (Archaeoglobus fulgidus (strain ATCC 49558 / DSM 4304 / JCM 9628 / NBRC 100126 / VC-16)).